Reading from the N-terminus, the 145-residue chain is D-aminoacyl-tRNA deacylase (145 aa).

Residues 137–138 (GP) carry the Gly-cisPro motif, important for rejection of L-amino acids motif.

It belongs to the DTD family. In terms of assembly, homodimer.

The protein localises to the cytoplasm. The enzyme catalyses glycyl-tRNA(Ala) + H2O = tRNA(Ala) + glycine + H(+). It carries out the reaction a D-aminoacyl-tRNA + H2O = a tRNA + a D-alpha-amino acid + H(+). Functionally, an aminoacyl-tRNA editing enzyme that deacylates mischarged D-aminoacyl-tRNAs. Also deacylates mischarged glycyl-tRNA(Ala), protecting cells against glycine mischarging by AlaRS. Acts via tRNA-based rather than protein-based catalysis; rejects L-amino acids rather than detecting D-amino acids in the active site. By recycling D-aminoacyl-tRNA to D-amino acids and free tRNA molecules, this enzyme counteracts the toxicity associated with the formation of D-aminoacyl-tRNA entities in vivo and helps enforce protein L-homochirality. This is D-aminoacyl-tRNA deacylase from Shewanella oneidensis (strain ATCC 700550 / JCM 31522 / CIP 106686 / LMG 19005 / NCIMB 14063 / MR-1).